Consider the following 194-residue polypeptide: dTTP/UTP pyrophosphatase (194 aa).

The active-site Proton acceptor is the D73.

The protein belongs to the Maf family. YhdE subfamily. It depends on a divalent metal cation as a cofactor.

It localises to the cytoplasm. The catalysed reaction is dTTP + H2O = dTMP + diphosphate + H(+). It catalyses the reaction UTP + H2O = UMP + diphosphate + H(+). Functionally, nucleoside triphosphate pyrophosphatase that hydrolyzes dTTP and UTP. May have a dual role in cell division arrest and in preventing the incorporation of modified nucleotides into cellular nucleic acids. This is dTTP/UTP pyrophosphatase from Geotalea uraniireducens (strain Rf4) (Geobacter uraniireducens).